A 360-amino-acid polypeptide reads, in one-letter code: Tyrosine-protein phosphatase non-receptor type 7 (360 aa).

A disordered region spans residues 1–37; the sequence is MVQAHGGRSRAQPLTLSLGAAMTQPPPEKTPAKKHVR. The segment at 38 to 51 is interaction with MAP kinases; it reads LQERRGSNVALMLD. Phosphoserine is present on serine 44. At threonine 66 the chain carries Phosphothreonine. Residues serine 93, serine 110, and serine 143 each carry the phosphoserine modification. In terms of domain architecture, Tyrosine-protein phosphatase spans 97-350; the sequence is LEEEFLKIPS…QFLHHTLALY (254 aa). Residues aspartate 257, 291–297, and glutamine 335 contribute to the substrate site; that span reads CSAGIGR. Cysteine 291 acts as the Phosphocysteine intermediate in catalysis. Cysteine 291 bears the Cysteine sulfenic acid (-SOH) mark.

The protein belongs to the protein-tyrosine phosphatase family. Non-receptor class subfamily. In terms of assembly, monomer. Interacts with MAPK1, MAPK3 and several other MAP kinases. Post-translationally, phosphorylated on serine residues in resting T-cells. Phosphorylation increases upon exposure to stimuli that increase intracellular cAMP levels. Phosphorylation leads to dissociation of bound MAP kinases. In terms of processing, oxidized at active site cysteine. Treatment with pervanadate (vanadate and H(2)O(2)) or with antigen enhanced oxidation of active site cysteine. In terms of tissue distribution, expressed exclusively in thymus and spleen.

Its subcellular location is the cytoplasm. It localises to the cytoskeleton. The catalysed reaction is O-phospho-L-tyrosyl-[protein] + H2O = L-tyrosyl-[protein] + phosphate. With respect to regulation, inhibited in cells after FCER1A triggering. Its function is as follows. Protein phosphatase that acts preferentially on tyrosine-phosphorylated MAPK1. Plays a role in the regulation of T and B-lymphocyte development and signal transduction. The polypeptide is Tyrosine-protein phosphatase non-receptor type 7 (PTPN7) (Homo sapiens (Human)).